The following is a 389-amino-acid chain: MSVRTLPLLFLNLGGEMLYILDQRLRAQNIPGDKARKDEWTEVDRKRVLNDIISTMFNRKFMEELFKPQELYSKKALRTVYERLAHASIMKLNQASMDKLYDLMTMAFKYQVLLCPRPKDVLLVTFNHLDTIKGFIRDSPTILQQVDETLRQLTEIYGGLSAGEFQLIRQTLLIFFQDLHIRVSMFLKDKVQNNNGRFVLPVSGPVPWGTEVPGLIRMFNNKGEEVKRIEFKHGGNYVPAPKEGSFELYGDRVLKLGTNMYSVNQPVETHVSGSSKNLASWTQESIAPNPLAKEELNFLARLMGGMEIKKPSGPEPGFRLNLFTTDEEEEQAALTRPEELSYEVINIQATQDQQRSEELARIMGEFEITEQPRLSTSKGDDLLAMMDEL.

As to expression, expressed predominantly in testis, also found in placenta and to a lesser extent in thymus and small intestine; abundantly expressed in tumor-derived cell lines. Ubiquitously expressed.

The protein resides in the basal cell membrane. May be involved in drug clearance in the placenta. In Homo sapiens (Human), this protein is Protein OSCP1 (OSCP1).